The following is a 330-amino-acid chain: Aspartate--ammonia ligase (330 aa).

The protein belongs to the class-II aminoacyl-tRNA synthetase family. AsnA subfamily.

It localises to the cytoplasm. It catalyses the reaction L-aspartate + NH4(+) + ATP = L-asparagine + AMP + diphosphate + H(+). Its pathway is amino-acid biosynthesis; L-asparagine biosynthesis; L-asparagine from L-aspartate (ammonia route): step 1/1. In Escherichia fergusonii (strain ATCC 35469 / DSM 13698 / CCUG 18766 / IAM 14443 / JCM 21226 / LMG 7866 / NBRC 102419 / NCTC 12128 / CDC 0568-73), this protein is Aspartate--ammonia ligase.